The following is a 293-amino-acid chain: 4-hydroxy-tetrahydrodipicolinate synthase (293 aa).

Threonine 44 lines the pyruvate pocket. The active-site Proton donor/acceptor is tyrosine 132. Catalysis depends on lysine 162, which acts as the Schiff-base intermediate with substrate. Isoleucine 204 lines the pyruvate pocket.

Belongs to the DapA family. In terms of assembly, homotetramer; dimer of dimers.

It localises to the cytoplasm. The enzyme catalyses L-aspartate 4-semialdehyde + pyruvate = (2S,4S)-4-hydroxy-2,3,4,5-tetrahydrodipicolinate + H2O + H(+). It functions in the pathway amino-acid biosynthesis; L-lysine biosynthesis via DAP pathway; (S)-tetrahydrodipicolinate from L-aspartate: step 3/4. Catalyzes the condensation of (S)-aspartate-beta-semialdehyde [(S)-ASA] and pyruvate to 4-hydroxy-tetrahydrodipicolinate (HTPA). This is 4-hydroxy-tetrahydrodipicolinate synthase from Erythrobacter litoralis (strain HTCC2594).